A 175-amino-acid chain; its full sequence is NADH-quinone oxidoreductase subunit I (175 aa).

4Fe-4S ferredoxin-type domains follow at residues 69 to 98 and 115 to 144; these read KRDE…IEAA and KKFE…LDGP. [4Fe-4S] cluster is bound by residues C78, C81, C84, C88, C124, C127, C130, and C134.

Belongs to the complex I 23 kDa subunit family. NDH-1 is composed of 14 different subunits. Subunits NuoA, H, J, K, L, M, N constitute the membrane sector of the complex. [4Fe-4S] cluster serves as cofactor.

The protein resides in the cell inner membrane. It carries out the reaction a quinone + NADH + 5 H(+)(in) = a quinol + NAD(+) + 4 H(+)(out). In terms of biological role, NDH-1 shuttles electrons from NADH, via FMN and iron-sulfur (Fe-S) centers, to quinones in the respiratory chain. The immediate electron acceptor for the enzyme in this species is believed to be ubiquinone. Couples the redox reaction to proton translocation (for every two electrons transferred, four hydrogen ions are translocated across the cytoplasmic membrane), and thus conserves the redox energy in a proton gradient. The sequence is that of NADH-quinone oxidoreductase subunit I from Leptospira interrogans serogroup Icterohaemorrhagiae serovar Lai (strain 56601).